The sequence spans 273 residues: uncharacterized protein (273 aa).

Residues 1–21 (MKILRWLFALVMLIATTEAMA) form the signal peptide.

To S.typhimurium YadU.

Its function is as follows. Part of the yfcOPQRSUV fimbrial operon. Could contribute to adhesion to various surfaces in specific environmental niches. Increases adhesion to eukaryotic T24 bladder epithelial cells in the absence of fim genes. This is an uncharacterized protein from Escherichia coli (strain K12).